We begin with the raw amino-acid sequence, 365 residues long: Serine/threonine-protein kinase SAPK6 (365 aa).

The region spanning 4 to 260 is the Protein kinase domain; sequence YELLKDIGSG…IREIRNHPWF (257 aa). Residues 10–18 and Lys33 each bind ATP; that span reads IGSGNFGVA. Asp123 acts as the Proton acceptor in catalysis. Residues 298–365 are disordered; the sequence is VQEAKTPPPS…AHASCDLQKS (68 aa). Residues 317-347 are compositionally biased toward acidic residues; sequence TEEEEQEDGKNPDDDEGDRDEEEGEEGDSED.

This sequence belongs to the protein kinase superfamily. Ser/Thr protein kinase family. Interacts with BZIP46. May be phosphorylated. As to expression, expressed in leaf blades and leaf sheaths. Expressed in shoots and roots of young seedlings.

The enzyme catalyses L-seryl-[protein] + ATP = O-phospho-L-seryl-[protein] + ADP + H(+). It catalyses the reaction L-threonyl-[protein] + ATP = O-phospho-L-threonyl-[protein] + ADP + H(+). With respect to regulation, activated by hyperosmotic stress. Its function is as follows. May play a role in signal transduction of hyperosmotic response. Can phosphorylate ABI5 in vitro. Can phosphorylate BZIP46 in vitro. The chain is Serine/threonine-protein kinase SAPK6 from Oryza sativa subsp. japonica (Rice).